A 190-amino-acid polypeptide reads, in one-letter code: GTP cyclohydrolase 1 (190 aa).

The Zn(2+) site is built by Cys-75, His-78, and Cys-146.

This sequence belongs to the GTP cyclohydrolase I family. Toroid-shaped homodecamer, composed of two pentamers of five dimers.

It catalyses the reaction GTP + H2O = 7,8-dihydroneopterin 3'-triphosphate + formate + H(+). The protein operates within cofactor biosynthesis; 7,8-dihydroneopterin triphosphate biosynthesis; 7,8-dihydroneopterin triphosphate from GTP: step 1/1. This Campylobacter curvus (strain 525.92) protein is GTP cyclohydrolase 1.